The following is a 634-amino-acid chain: Hyphal wall protein 1 (634 aa).

The N-terminal stretch at 1–27 (MRLSTAQLIAIAYYMLSIGATVPQVDG) is a signal peptide. Disordered regions lie at residues 40-307 (SYDY…TTTT) and 412-570 (CPLT…SGAI). Low complexity predominate over residues 42-114 (DYYQEPCDDY…DYPQQPQEPC (73 aa)). The 1; approximate repeat unit spans residues 46–58 (EPCDDYPQQQQQQ). A 14 X 10 AA tandem repeats of [EVIQ]-P-[CDT]-D-[YNW]-P-[PQ]-[QI]-[QP]-[QDN] region spans residues 46–187 (EPCDDYPQQQ…PNIPTDWIPD (142 aa)). The stretch at 59-69 (EPCDYPQQQQQ) is one 2; approximate repeat. Residues 70–81 (EEPCDYPQQQPQ) form a 3; approximate repeat. 9 tandem repeats follow at residues 82-91 (EPCDYPQQPQ), 92-101 (EPCDYPQQPQ), 102-111 (EPCDYPQQPQ), 112-121 (EPCDNPPQPD), 122-131 (VPCDNPPQPD), 132-141 (VPCDNPPQPD), 142-151 (VPCDNPPQPD), 152-161 (VPCDNPPQPD), and 162-171 (QPDDNPPIPN). Pro residues predominate over residues 115–171 (DNPPQPDVPCDNPPQPDVPCDNPPQPDVPCDNPPQPDVPCDNPPQPDQPDDNPPIPN). Residues 172–179 (IPTDWIPN) form a 13; truncated repeat. Low complexity-rich tracts occupy residues 172–183 (IPTDWIPNIPTD) and 193–307 (TTPA…TTTT). One copy of the 14; truncated repeat lies at 180-187 (IPTDWIPD). N-linked (GlcNAc...) asparagine glycosylation is found at asparagine 241 and asparagine 286. A compositionally biased stretch (polar residues) spans 415–426 (TENTPGTDSTPE). Residues 508–550 (ETKPAAPKSSAPATEPSPVAPGTESAPAGPGASSSPKSSVLAS) are compositionally biased toward low complexity. Residue asparagine 601 is glycosylated (N-linked (GlcNAc...) asparagine). The GPI-anchor amidated glycine moiety is linked to residue glycine 613. The propeptide at 614 to 634 (AGNNMRLTFGAAIIGIAAFLI) is removed in mature form.

Belongs to the HWP1 family. Post-translationally, the GPI-anchor is attached to the protein in the endoplasmic reticulum and serves to target the protein to the cell surface. There, the glucosamine-inositol phospholipid moiety is cleaved off and the GPI-modified mannoprotein is covalently attached via its lipidless GPI glycan remnant to the 1,6-beta-glucan of the outer cell wall layer. In terms of processing, serves as a substrate for mammalian transglutaminases which are necessary for cross-linking between HWP1 and host epithelial cells. Also predicted to be a substrate for cleavage by KEX2. N- and O-glycosylated.

The protein resides in the secreted. It localises to the cell wall. It is found in the membrane. Major hyphal cell wall protein which plays a role of adhesin and is required for mating, normal hyphal development, cell-to-cell adhesive functions necessary for biofilm integrity, attachment to host, and virulence. Promotes interactions with host and bacterial molecules, thus leading to effective colonization within polymicrobial communities. Plays a crucial role in gastrointestinal colonization, in mucosal symptomatic and asymptomatic infections, in vaginitis, as well as in lethal oroesophageal candidiasis, caused by the combined action of fungal virulence factors and host inflammatory responses when protective immunity is absent. This is Hyphal wall protein 1 (HWP1) from Candida albicans (strain SC5314 / ATCC MYA-2876) (Yeast).